The primary structure comprises 902 residues: Nitrate reductase [NADPH] (902 aa).

Cys182 contributes to the Mo-molybdopterin binding site. Positions 537–612 (LPLIFADEVA…LKKYCIGRCS (76 aa)) constitute a Cytochrome b5 heme-binding domain. Residues His572 and His595 each contribute to the heme site. An FAD-binding FR-type domain is found at 637-751 (RTKVPIVLIS…KGPLGHFTYY (115 aa)). FAD contacts are provided by residues 689 to 692 (RAYT), 708 to 712 (LIKVY), Phe713, 725 to 727 (LFS), and Thr778. NADP(+) is bound at residue 872–879 (CMCGPEGM).

Belongs to the nitrate reductase family. As to quaternary structure, homodimer. Requires FAD as cofactor. Heme is required as a cofactor. Mo-molybdopterin serves as cofactor.

It catalyses the reaction nitrite + NADP(+) + H2O = nitrate + NADPH + H(+). Functionally, nitrate reductase is a key enzyme involved in the first step of nitrate assimilation in plants, fungi and bacteria. The chain is Nitrate reductase [NADPH] (NIAA) from Phytophthora infestans (Potato late blight agent).